Reading from the N-terminus, the 225-residue chain is 3-dehydroquinate dehydratase (225 aa).

Residues serine 6, 30-32 (EWR), and arginine 62 contribute to the 3-dehydroquinate site. Residue histidine 118 is the Proton donor/acceptor of the active site. The active-site Schiff-base intermediate with substrate is lysine 143. Positions 186, 205, and 209 each coordinate 3-dehydroquinate.

The protein belongs to the type-I 3-dehydroquinase family. In terms of assembly, homodimer.

The enzyme catalyses 3-dehydroquinate = 3-dehydroshikimate + H2O. The protein operates within metabolic intermediate biosynthesis; chorismate biosynthesis; chorismate from D-erythrose 4-phosphate and phosphoenolpyruvate: step 3/7. Involved in the third step of the chorismate pathway, which leads to the biosynthesis of aromatic amino acids. Catalyzes the cis-dehydration of 3-dehydroquinate (DHQ) and introduces the first double bond of the aromatic ring to yield 3-dehydroshikimate. This chain is 3-dehydroquinate dehydratase, found in Streptococcus pneumoniae (strain Taiwan19F-14).